The sequence spans 252 residues: Secreted LysM effector LysM1 (252 aa).

The 45-residue stretch at 20–64 (FAIPGDPGDTCDTLSDRWGITIDIFKSLNPGVNCPNLVANMEYCV) folds into the LysM 1 domain. Positions 71 to 98 (DTPSTTTTAKPTMTPTSTPTKTTTTSTA) are disordered. Positions 72–98 (TPSTTTTAKPTMTPTSTPTKTTTTSTA) are enriched in low complexity. 2 LysM domains span residues 126-172 (KFHL…YVCV) and 204-250 (KFHL…YVCI).

The protein belongs to the secreted LysM effector family.

Its subcellular location is the secreted. It is found in the cell wall. Secreted effector that binds two substrates, chitin and N-linked oligosaccharides associated with human skin glycoproteins. Could provide the pathogen with three important functions including shielding host cell wall chitin from the human immune system, shielding the pathogen's glycoproteins from host degradation and immune surveillance, and helping facilitate pathogen adhesion to human skin. The polypeptide is Secreted LysM effector LysM1 (Trichophyton rubrum (strain ATCC MYA-4607 / CBS 118892) (Athlete's foot fungus)).